Reading from the N-terminus, the 198-residue chain is MEVKKPTIKSIPYEDFKDNEYLENMVKQLNEGGTKVLVGCLDDLINWGRSNSLWPLTFATSCCGIEFMAVGAARYDFARFGFEVARASPRQADMIMVAGTITHKMAPVLKRLYDQMADPKYVIAVGGCAISGGPFKKSYHVLNGVDKILPVDVYIPGCPPRPEALLYGMIQLQRKVKLEKFFGGVNRKENEPQNPEQA.

4 residues coordinate [4Fe-4S] cluster: Cys-62, Cys-63, Cys-128, and Cys-158.

This sequence belongs to the complex I 20 kDa subunit family. As to quaternary structure, NDH-1 is composed of 14 different subunits. Subunits NuoB, C, D, E, F, and G constitute the peripheral sector of the complex. [4Fe-4S] cluster serves as cofactor.

The protein localises to the cell inner membrane. It catalyses the reaction a quinone + NADH + 5 H(+)(in) = a quinol + NAD(+) + 4 H(+)(out). Functionally, NDH-1 shuttles electrons from NADH, via FMN and iron-sulfur (Fe-S) centers, to quinones in the respiratory chain. The immediate electron acceptor for the enzyme in this species is believed to be a menaquinone. Couples the redox reaction to proton translocation (for every two electrons transferred, four hydrogen ions are translocated across the cytoplasmic membrane), and thus conserves the redox energy in a proton gradient. The polypeptide is NADH-quinone oxidoreductase subunit B (Phocaeicola vulgatus (strain ATCC 8482 / DSM 1447 / JCM 5826 / CCUG 4940 / NBRC 14291 / NCTC 11154) (Bacteroides vulgatus)).